We begin with the raw amino-acid sequence, 862 residues long: Transcription initiation factor TFIID subunit 4B (862 aa).

Residues 100–241 are sufficient for interaction with ZNF628; it reads NTTTIQFPAN…TPSNEPNLKA (142 aa). Over residues 219-237 the composition is skewed to polar residues; it reads VTTLKPSSLGASSTPSNEP. The disordered stretch occupies residues 219-239; the sequence is VTTLKPSSLGASSTPSNEPNL. Residues 256–353 enclose the TAFH domain; that stretch reads LENVKKCKNF…CVQQTSSDMV (98 aa). A required for interaction with P65/RELA region spans residues 511 to 533; that stretch reads PGPVLSQPAGIPQAVQVKQLVVQ. A Nuclear export signal motif is present at residues 516-556; that stretch reads SQPAGIPQAVQVKQLVVQQPSGGNEKQVTTISHSSTLTIQK. Ser595 is subject to Phosphoserine. Residues 653–702 enclose the Histone-fold domain; the sequence is PFLFIGALQKRILDIGKKHDITELNSDAVNLISQATQERLRGLLEKLTAI. Residues 722–787 adopt a coiled-coil conformation; that stretch reads TRSQLKFLEK…LAQIQHRDAN (66 aa). Residues 830–862 are required for interaction with TAF12; that stretch reads PRITRICLRDLIFCMEQEREMKYSRALYLALLK.

This sequence belongs to the TAF4 family. TFIID is composed of TATA binding protein (TBP) and a number of TBP-associated factors (TAFs). Heterodimerizes with TAF12/TFII20 via the C-terminal H2A-like histone-fold domain. This heterodimer forms a histone-like octamer with the TAF6/TAFII70-TAF9/TAFII31 heterodimer. Interacts with P65/RELA homodimers and P65/RELA-REL heterodimers. Interaction with POU2AF1, via its C-terminal activation domain, is required for octamer-dependent transcription. Interacts with ZNF628. In terms of processing, under stimulation by forskolin, Isoform 1 is phosphorylated by protein kinase A (PKA). In terms of tissue distribution, preferentially expressed in ovarian granulosa cells (at protein level). Highly expressed in B-cells.

Its subcellular location is the nucleus. The protein resides in the cytoplasm. Its function is as follows. Cell type-specific subunit of the general transcription factor TFIID that may function as a gene-selective coactivator in certain cells. TFIID is a multimeric protein complex that plays a central role in mediating promoter responses to various activators and repressors. TAF4B is a transcriptional coactivator of the p65/RELA NF-kappa-B subunit. Involved in the activation of a subset of antiapoptotic genes including TNFAIP3. May be involved in regulating folliculogenesis. Through interaction with OCBA/POU2AF1, acts as a coactivator of B-cell-specific transcription. Plays a role in spermiogenesis and oogenesis. The protein is Transcription initiation factor TFIID subunit 4B (TAF4B) of Homo sapiens (Human).